An 838-amino-acid polypeptide reads, in one-letter code: Translation initiation factor IF-2 (838 aa).

The interval 50–108 (VQSGKKPESPEKKDIKQNTQKEAPETQTQQKPIEQEVETKQNIDSTPIKVEPKQESLAS) is disordered. The span at 54–65 (KKPESPEKKDIK) shows a compositional bias: basic and acidic residues. A compositionally biased stretch (polar residues) spans 66–81 (QNTQKEAPETQTQQKP). Residues 337 to 506 (SRAPVVTIMG…LLQAELLELK (170 aa)) form the tr-type G domain. The G1 stretch occupies residues 346–353 (GHVDHGKT). 346–353 (GHVDHGKT) provides a ligand contact to GTP. The interval 371–375 (GITQH) is G2. Positions 392–395 (DTPG) are G3. Residues 392-396 (DTPGH) and 446-449 (NKMD) contribute to the GTP site. A G4 region spans residues 446-449 (NKMD). The G5 stretch occupies residues 482–484 (SAK).

Belongs to the TRAFAC class translation factor GTPase superfamily. Classic translation factor GTPase family. IF-2 subfamily.

It localises to the cytoplasm. Functionally, one of the essential components for the initiation of protein synthesis. Protects formylmethionyl-tRNA from spontaneous hydrolysis and promotes its binding to the 30S ribosomal subunits. Also involved in the hydrolysis of GTP during the formation of the 70S ribosomal complex. In Campylobacter fetus subsp. fetus (strain 82-40), this protein is Translation initiation factor IF-2.